A 1151-amino-acid polypeptide reads, in one-letter code: Ankyrin and IPT/TIG repeat-containing protein C26H5.05 (1151 aa).

Disordered stretches follow at residues 77–104, 452–511, and 516–535; these read NLPS…AECL, KSRN…ENSR, and QLSA…KSVE. The span at 87–98 shows a compositional bias: polar residues; sequence SHASSPNLSNSQ. Positions 452–463 are enriched in basic and acidic residues; sequence KSRNLTKSEKTG. 2 stretches are compositionally biased toward polar residues: residues 464 to 496 and 517 to 532; these read KSNS…SDNP and LSAS…STLK. An IPT/TIG domain is found at 658-739; it reads PLISRIIPNK…SSEAPVMFTY (82 aa). 2 ANK repeats span residues 861–890 and 894–923; these read SGRS…DVNK and LGYT…KPDV. The disordered stretch occupies residues 1041 to 1067; it reads PPPYSEFADDTTAQAGSSKRDSAISED. Residues 1058 to 1067 show a composition bias toward basic and acidic residues; the sequence is SKRDSAISED. A helical transmembrane segment spans residues 1113 to 1133; it reads MDFMLFSFWLPALLLLSIFGL.

It is found in the vacuole membrane. This Schizosaccharomyces pombe (strain 972 / ATCC 24843) (Fission yeast) protein is Ankyrin and IPT/TIG repeat-containing protein C26H5.05.